Here is a 321-residue protein sequence, read N- to C-terminus: Small ribosomal subunit biogenesis GTPase RsgA (321 aa).

One can recognise a CP-type G domain in the interval 89–248 (QSWINRPPVA…VADTPGFNRP (160 aa)). GTP is bound by residues 138 to 141 (TKRD) and 190 to 198 (GPSGVGKTS). Positions 273, 278, 280, and 286 each coordinate Zn(2+).

This sequence belongs to the TRAFAC class YlqF/YawG GTPase family. RsgA subfamily. As to quaternary structure, monomer. Associates with 30S ribosomal subunit, binds 16S rRNA. The cofactor is Zn(2+).

It is found in the cytoplasm. In terms of biological role, one of several proteins that assist in the late maturation steps of the functional core of the 30S ribosomal subunit. Helps release RbfA from mature subunits. May play a role in the assembly of ribosomal proteins into the subunit. Circularly permuted GTPase that catalyzes slow GTP hydrolysis, GTPase activity is stimulated by the 30S ribosomal subunit. This Prochlorococcus marinus (strain MIT 9313) protein is Small ribosomal subunit biogenesis GTPase RsgA.